The primary structure comprises 146 residues: Large-conductance mechanosensitive channel (146 aa).

2 helical membrane passes run 15–35 (VSLA…TSLV) and 81–101 (GIFI…FIII).

This sequence belongs to the MscL family. Homopentamer.

The protein resides in the cell membrane. Its function is as follows. Channel that opens in response to stretch forces in the membrane lipid bilayer. May participate in the regulation of osmotic pressure changes within the cell. The polypeptide is Large-conductance mechanosensitive channel (Clostridium beijerinckii (strain ATCC 51743 / NCIMB 8052) (Clostridium acetobutylicum)).